The following is a 369-amino-acid chain: MKFYLVGGAVRDMLLGITPKDKDWVVVGATEDEMLANGFIKIAANFPVFIHPQTKQEYALARSEKKTANGYHGFEVNFSKYITLEDDLKRRDLTINSIAIDQNNKVIDPFNGQADLQNRILRHTSIAFIEDPLRVVRLARFKAQLSNFNFSIAEETLTLIKELIKTGELNHLTRERLHIEFVKALNNPKIFFTTLEELEALKIIFPNISCILLLIPNKSFFENPIYKDSNINEKITLCLLKVPQQKLDDIRKELLLTNKHYKLLKASIAISKILEDRNITAEEIFQLIKNANIIRDKNLFAESLNLYKKYLKVCDTITPHRNYQLLQTTINTIKNASINSLTIETIPKDKLRNTLKQLYIDIIKKQLKL.

ATP is bound by residues Gly8 and Arg11. The CTP site is built by Gly8 and Arg11. Positions 21 and 23 each coordinate Mg(2+). ATP-binding residues include Arg91, Arg137, and Arg140. CTP is bound by residues Arg91, Arg137, and Arg140.

This sequence belongs to the tRNA nucleotidyltransferase/poly(A) polymerase family. Bacterial CCA-adding enzyme type 2 subfamily. Mg(2+) is required as a cofactor.

The catalysed reaction is a tRNA precursor + 2 CTP + ATP = a tRNA with a 3' CCA end + 3 diphosphate. The enzyme catalyses a tRNA with a 3' CCA end + 2 CTP + ATP = a tRNA with a 3' CCACCA end + 3 diphosphate. Its function is as follows. Catalyzes the addition and repair of the essential 3'-terminal CCA sequence in tRNAs without using a nucleic acid template. Adds these three nucleotides in the order of C, C, and A to the tRNA nucleotide-73, using CTP and ATP as substrates and producing inorganic pyrophosphate. tRNA 3'-terminal CCA addition is required both for tRNA processing and repair. Also involved in tRNA surveillance by mediating tandem CCA addition to generate a CCACCA at the 3' terminus of unstable tRNAs. While stable tRNAs receive only 3'-terminal CCA, unstable tRNAs are marked with CCACCA and rapidly degraded. This is CCA-adding enzyme from Francisella tularensis subsp. novicida (strain U112).